Here is a 113-residue protein sequence, read N- to C-terminus: UPF0482 protein CKO_01577 (113 aa).

An N-terminal signal peptide occupies residues 1–28 (MNNTLSKRLCLTAMLALGAVVYTTSAFA). Residues 44–67 (RQHAAMEKEQWNDTRSLRQKVNTR) form a disordered region. Residues 47 to 59 (AAMEKEQWNDTRS) are compositionally biased toward basic and acidic residues.

This sequence belongs to the UPF0482 family.

The chain is UPF0482 protein CKO_01577 from Citrobacter koseri (strain ATCC BAA-895 / CDC 4225-83 / SGSC4696).